Here is a 207-residue protein sequence, read N- to C-terminus: Large ribosomal subunit protein uL4 (207 aa).

The segment at 55-76 (ALVSGGGKKPWRQKGTGRARHG) is disordered. Basic residues predominate over residues 63–76 (KPWRQKGTGRARHG).

This sequence belongs to the universal ribosomal protein uL4 family. As to quaternary structure, part of the 50S ribosomal subunit.

One of the primary rRNA binding proteins, this protein initially binds near the 5'-end of the 23S rRNA. It is important during the early stages of 50S assembly. It makes multiple contacts with different domains of the 23S rRNA in the assembled 50S subunit and ribosome. In terms of biological role, forms part of the polypeptide exit tunnel. This Phytoplasma mali (strain AT) protein is Large ribosomal subunit protein uL4.